The chain runs to 380 residues: N-acetylcysteine deacetylase (380 aa).

Ni(2+) contacts are provided by C98, H100, E134, H158, and H350.

This sequence belongs to the peptidase M20 family. Requires a divalent metal cation as cofactor.

It catalyses the reaction N-acetyl-L-cysteine + H2O = L-cysteine + acetate. Its pathway is amino-acid biosynthesis; L-cysteine biosynthesis. Functionally, probably catalyzes the deacetylation of N-acetylcysteine (NAC) to acetate and cysteine. Is involved in a S-(2-succino)cysteine (2SC) degradation pathway that allows B.subtilis to grow on 2SC as a sole sulfur source, via its metabolization to cysteine. This chain is N-acetylcysteine deacetylase, found in Bacillus subtilis (strain 168).